The chain runs to 558 residues: Acylase ACY 1 proenzyme (558 aa).

Thr-368 (nucleophile) is an active-site residue.

It belongs to the gamma-glutamyltransferase family. As to quaternary structure, dimer of two non-identical chains processed from the same precursor.

The catalysed reaction is (7R)-7-(4-carboxybutanamido)cephalosporanate + H2O = (7R)-7-aminocephalosporanate + glutarate. It catalyses the reaction an N-terminal (5-L-glutamyl)-[peptide] + an alpha-amino acid = 5-L-glutamyl amino acid + an N-terminal L-alpha-aminoacyl-[peptide]. It carries out the reaction glutathione + H2O = L-cysteinylglycine + L-glutamate. The enzyme catalyses an S-substituted glutathione + H2O = an S-substituted L-cysteinylglycine + L-glutamate. In terms of biological role, besides the cephalosporin acylase I activity which converts GL-7ACA into 7-ACA; this enzyme displays some gamma glutamyltranspeptidase activity. The polypeptide is Acylase ACY 1 proenzyme (acyI) (Pseudomonas sp. (strain SE83)).